The primary structure comprises 1187 residues: Myelin transcription factor 1-like protein (1187 aa).

The tract at residues 1–22 is disordered; the sequence is MDVDSEEKRHRTRSKGVRVPVE. Residues 22–65 form a CCHHC-type 1 zinc finger; that stretch reads EPAIQELFSCPTPGCDGSGHVSGKYARHRSVYGCPLAKKRKTQD. Residues Cys-31, Cys-36, His-49, and Cys-55 each coordinate Zn(2+). Disordered stretches follow at residues 56-178 and 221-248; these read PLAK…QMSC and RTES…GRKS. A compositionally biased stretch (acidic residues) spans 89-172; sequence ECYESDGTED…EEEEEEEENE (84 aa). Ser-251 carries the phosphoserine modification. Disordered stretches follow at residues 343–422 and 450–514; these read SETN…DRSE and REKM…GCDG. The segment covering 344–358 has biased composition (polar residues); the sequence is ETNPQDRSQPPNMSV. 4 stretches are compositionally biased toward basic and acidic residues: residues 362-377, 401-412, 450-488, and 496-506; these read VRQE…DRSY, AKEDGCHERDDD, REKM…DSHV, and DPSRTEKRESK. CCHHC-type zinc fingers lie at residues 498–541 and 542–585; these read SRTE…PPEI and LAMH…KLAK. Zn(2+) contacts are provided by Cys-507, Cys-512, His-525, Cys-531, Cys-551, Cys-556, His-569, and Cys-575. Residues 686 to 710 are disordered; sequence ASPSSSTTSSYAPSSSSNLSCGGGS. CCHHC-type zinc fingers lie at residues 897–940, 946–989, and 999–1042; these read LATS…GIRI, DKED…QKDG, and KSVK…MKKA. 12 residues coordinate Zn(2+): Cys-906, Cys-911, His-924, Cys-930, Cys-955, Cys-960, His-973, Cys-979, Cys-1008, Cys-1013, His-1026, and Cys-1032. Residues 1058–1132 are a coiled coil; it reads NGIENDEEIK…ANLSQSLIHS (75 aa).

This sequence belongs to the MYT1 family. Interacts with SIN3B. Brain.

The protein localises to the nucleus. It localises to the chromosome. Its function is as follows. Transcription factor that plays a key role in neuronal differentiation by specifically repressing expression of non-neuronal genes during neuron differentiation. In contrast to other transcription repressors that inhibit specific lineages, mediates repression of multiple differentiation programs. Also represses expression of negative regulators of neurogenesis, such as members of the Notch signaling pathway, including HES1. The combination of three transcription factors, ASCL1, POU3F2/BRN2 and MYT1L, is sufficient to reprogram fibroblasts and other somatic cells into induced neuronal (iN) cells in vitro. Directly binds the 5'-AAGTT-3' core motif present on the promoter of target genes and represses transcription by recruiting a multiprotein complex containing SIN3B. The 5'-AAGTT-3' core motif is absent from the promoter of neural genes. The protein is Myelin transcription factor 1-like protein of Mus musculus (Mouse).